A 194-amino-acid chain; its full sequence is UPF0215 protein Mbar_A0619 (194 aa).

It belongs to the UPF0215 family.

The polypeptide is UPF0215 protein Mbar_A0619 (Methanosarcina barkeri (strain Fusaro / DSM 804)).